A 428-amino-acid polypeptide reads, in one-letter code: Enolase (428 aa).

Gln163 provides a ligand contact to (2R)-2-phosphoglycerate. Glu205 acts as the Proton donor in catalysis. Residues Asp242, Glu283, and Asp310 each coordinate Mg(2+). 4 residues coordinate (2R)-2-phosphoglycerate: Lys335, Arg364, Ser365, and Lys386. The active-site Proton acceptor is Lys335.

Belongs to the enolase family. The cofactor is Mg(2+).

It is found in the cytoplasm. The protein localises to the secreted. Its subcellular location is the cell surface. It catalyses the reaction (2R)-2-phosphoglycerate = phosphoenolpyruvate + H2O. Its pathway is carbohydrate degradation; glycolysis; pyruvate from D-glyceraldehyde 3-phosphate: step 4/5. In terms of biological role, catalyzes the reversible conversion of 2-phosphoglycerate (2-PG) into phosphoenolpyruvate (PEP). It is essential for the degradation of carbohydrates via glycolysis. The chain is Enolase from Streptomyces avermitilis (strain ATCC 31267 / DSM 46492 / JCM 5070 / NBRC 14893 / NCIMB 12804 / NRRL 8165 / MA-4680).